A 296-amino-acid polypeptide reads, in one-letter code: Ribosomal RNA small subunit methyltransferase A (296 aa).

Residues Asn-30, Leu-32, Gly-57, Glu-78, Asp-103, and Asn-128 each coordinate S-adenosyl-L-methionine.

This sequence belongs to the class I-like SAM-binding methyltransferase superfamily. rRNA adenine N(6)-methyltransferase family. RsmA subfamily.

The protein localises to the cytoplasm. The catalysed reaction is adenosine(1518)/adenosine(1519) in 16S rRNA + 4 S-adenosyl-L-methionine = N(6)-dimethyladenosine(1518)/N(6)-dimethyladenosine(1519) in 16S rRNA + 4 S-adenosyl-L-homocysteine + 4 H(+). In terms of biological role, specifically dimethylates two adjacent adenosines (A1518 and A1519) in the loop of a conserved hairpin near the 3'-end of 16S rRNA in the 30S particle. May play a critical role in biogenesis of 30S subunits. The protein is Ribosomal RNA small subunit methyltransferase A of Staphylococcus carnosus (strain TM300).